A 39-amino-acid polypeptide reads, in one-letter code: Photosystem II reaction center protein L (39 aa).

A helical transmembrane segment spans residues 18–38; that stretch reads SLYLGLLLVAVLGILFSSYFF.

Belongs to the PsbL family. As to quaternary structure, PSII is composed of 1 copy each of membrane proteins PsbA, PsbB, PsbC, PsbD, PsbE, PsbF, PsbH, PsbI, PsbJ, PsbK, PsbL, PsbM, PsbT, PsbX, PsbY, PsbZ, Psb30/Ycf12, peripheral proteins PsbO, CyanoQ (PsbQ), PsbU, PsbV and a large number of cofactors. It forms dimeric complexes.

The protein resides in the cellular thylakoid membrane. Functionally, one of the components of the core complex of photosystem II (PSII). PSII is a light-driven water:plastoquinone oxidoreductase that uses light energy to abstract electrons from H(2)O, generating O(2) and a proton gradient subsequently used for ATP formation. It consists of a core antenna complex that captures photons, and an electron transfer chain that converts photonic excitation into a charge separation. This subunit is found at the monomer-monomer interface and is required for correct PSII assembly and/or dimerization. The polypeptide is Photosystem II reaction center protein L (Microcystis aeruginosa (strain NIES-843 / IAM M-2473)).